The sequence spans 510 residues: Zinc finger protein 692 (510 aa).

Disordered stretches follow at residues 1–20 (MAAS…RQLD) and 121–306 (WGPS…EDTA). Position 161 is a phosphoserine (Ser161). A compositionally biased stretch (basic and acidic residues) spans 163-172 (CDERAQEARM). Acidic residues predominate over residues 188-201 (EDGEEEEEDEEEML). A Phosphoserine modification is found at Ser225. A compositionally biased stretch (low complexity) spans 237-265 (APAPAAVPAPLASPSSSASSLGSGAPGPV). A compositionally biased stretch (polar residues) spans 278–297 (QADQQTEPLASPGSQAQSAL). 5 consecutive C2H2-type zinc fingers follow at residues 322–347 (LPCD…KYQH), 353–377 (FSCP…VKLH), 383–405 (YICE…RRIH), 411–433 (LQCE…RRKH), and 442–465 (FPCE…SKSH). Ser464 is subject to Phosphoserine.

This sequence belongs to the krueppel C2H2-type zinc-finger protein family. Post-translationally, phosphorylation at Ser-464 results in loss of DNA-binding activity.

It localises to the nucleus. Functionally, may act as an transcriptional repressor for PCK1 gene expression, in turn may participate in the hepatic gluconeogenesis regulation through the activated AMPK signaling pathway. The sequence is that of Zinc finger protein 692 from Bos taurus (Bovine).